A 130-amino-acid polypeptide reads, in one-letter code: Small ribosomal subunit protein uS9 (130 aa).

Belongs to the universal ribosomal protein uS9 family.

The sequence is that of Small ribosomal subunit protein uS9 from Salmonella paratyphi A (strain AKU_12601).